We begin with the raw amino-acid sequence, 930 residues long: Translation initiation factor IF-2 (930 aa).

Positions 29 to 316 are disordered; the sequence is GEFVKSASST…GRKSKRAKRA (288 aa). Pro residues predominate over residues 81–120; the sequence is RPGPKPGPPVAQQPAAPAAPPAAPPAPPTPAAAPPSPAPA. The span at 121–135 shows a compositional bias: low complexity; it reads APAAATPAEPAAPSA. Pro residues-rich tracts occupy residues 136–155 and 180–191; these read RPGPTPGPRPGPSAPKPGAP and PRPQGPGGPRPG. The segment covering 192-204 has biased composition (gly residues); sequence PGAGGPRPGGGPR. Residues 228-240 are compositionally biased toward pro residues; sequence GGGPRPGGGPRPT. A compositionally biased stretch (gly residues) spans 241–301; that stretch reads PGGAGRPGGG…GAAGAFGRPG (61 aa). Over residues 305–314 the composition is skewed to basic residues; sequence KRGRKSKRAK. The 173-residue stretch at 426–598 folds into the tr-type G domain; sequence IRPPVVTVMG…VILTADASLD (173 aa). The G1 stretch occupies residues 435–442; sequence GHVDHGKT. Residue 435 to 442 coordinates GTP; the sequence is GHVDHGKT. Positions 460–464 are G2; that stretch reads GITQH. The tract at residues 485 to 488 is G3; the sequence is DTPG. GTP is bound by residues 485-489 and 539-542; these read DTPGH and NKID. Residues 539-542 form a G4 region; sequence NKID. The interval 575–577 is G5; it reads SAK.

Belongs to the TRAFAC class translation factor GTPase superfamily. Classic translation factor GTPase family. IF-2 subfamily.

It localises to the cytoplasm. In terms of biological role, one of the essential components for the initiation of protein synthesis. Protects formylmethionyl-tRNA from spontaneous hydrolysis and promotes its binding to the 30S ribosomal subunits. Also involved in the hydrolysis of GTP during the formation of the 70S ribosomal complex. The protein is Translation initiation factor IF-2 of Mycolicibacterium vanbaalenii (strain DSM 7251 / JCM 13017 / BCRC 16820 / KCTC 9966 / NRRL B-24157 / PYR-1) (Mycobacterium vanbaalenii).